A 538-amino-acid polypeptide reads, in one-letter code: NAD(P)H-quinone oxidoreductase chain 4 1 (538 aa).

13 helical membrane passes run 7-27, 37-57, 88-108, 116-136, 137-157, 170-190, 210-230, 244-264, 278-298, 315-335, 336-356, 388-408, and 418-438; these read FPWL…IPII, WYGL…FWHY, LSMP…FAAW, LFYG…VAQD, LLLF…LISI, FILY…ALAF, AIEL…LPIF, SAPG…YALI, FAPV…CCAF, MGFV…GAVL, QMVS…VTYE, LALP…GIAT, and VVVV…LLSM.

It belongs to the complex I subunit 4 family.

It localises to the cellular thylakoid membrane. It carries out the reaction a plastoquinone + NADH + (n+1) H(+)(in) = a plastoquinol + NAD(+) + n H(+)(out). The catalysed reaction is a plastoquinone + NADPH + (n+1) H(+)(in) = a plastoquinol + NADP(+) + n H(+)(out). Functionally, NDH-1 shuttles electrons from NAD(P)H, via FMN and iron-sulfur (Fe-S) centers, to quinones in the respiratory chain. The immediate electron acceptor for the enzyme in this species is believed to be plastoquinone. Couples the redox reaction to proton translocation (for every two electrons transferred, four hydrogen ions are translocated across the cytoplasmic membrane), and thus conserves the redox energy in a proton gradient. The chain is NAD(P)H-quinone oxidoreductase chain 4 1 from Nostoc sp. (strain PCC 7120 / SAG 25.82 / UTEX 2576).